Consider the following 278-residue polypeptide: Secoisolariciresinol dehydrogenase (278 aa).

Residues 23-28 (GGAGGI), Asp-47, Val-73, and Asn-99 each bind NAD(+). Residues Ser-104 and Ser-164 each contribute to the substrate site. The active-site Proton donor/acceptor is Tyr-167. NAD(+) contacts are provided by Lys-171 and Val-200.

Belongs to the short-chain dehydrogenases/reductases (SDR) family. In terms of assembly, homotetramer.

It carries out the reaction (-)-secoisolariciresinol + 2 NAD(+) = (-)-matairesinol + 2 NADH + 2 H(+). Oxidoreductase involved in lignan biosynthesis. Catalyzes the stereospecific conversion of (-)-secoisolariciresinol to (-)-matairesinol via a lactol intermediate. The sequence is that of Secoisolariciresinol dehydrogenase from Podophyllum peltatum (American mandrake).